Here is an 843-residue protein sequence, read N- to C-terminus: MSLISAVEDRDIHNIGKTSGGGSRTSSINSSKKSLKHGSKSLRKPKVYQTTGEPLSREALYKAKLKYGVYQSPAQSYSIGVSDAHAASDKAANLAHDNQTTVEAYKRMFIDPNATKAASKMGPKVVRNNSITSATSKTSKESQTKRKSKESPGAAASKAYSMTMETTSLSSQTNSRSYSITSASSVLSGASGSFNSTVNPKPKTLNLEKVLVGAEKKAESRIKERWEPEKTNFQYGVKTDEHGNLNQFSFSNEMMNNIMAKVDAPKAQDLQKVKKVSAEKEAKSMKFALGAANAVKDMHPGEDIDKSIALKAQKRETYLSQLTSQQVLTLARANVDRQLDIIEKSDMHRKLFTNMEYNKAAVAVAQSNHQKKTEFHNKINMGGGLFLSPEDITKIASGLISPVLGEVSERAEAQRAMDEEIAERTEAYNKSLNEWETMERSIISNDAKVLTTTANRHQTEKKTSQEKIKASFDALVARMDTKVAERETLLEDTKSKEIEFKKQMQQELKDEKARLDQDLEEWGKKCEQDITEARKEQEELLKPYHDDLANAEAEHKTLVEERDEINAEISRLQDAIVDHKRKISGYGNDLDAQKNRNIREDDKLLELGQTKESLESHLNDDVIILANKAKEQAELSTKEARLKQLEVDSLINERKSELNATEIELKKEKLNLLEAMKDVASARGDDKIDEEKVKKLIGMTSEEYLTQNKSVEKNVEDLPTQLEKIEEGDELKKEEIVGAETKNSGGDGVPVSTAAKEATETSSAVQTKEPEEKISIGNKSSGKEDANDCKSAEHSKEISVSQKAGNNKSLGVSPDSLEHTFSGFSQGSSIEDDQDAISNQEKK.

The tract at residues 1-54 (MSLISAVEDRDIHNIGKTSGGGSRTSSINSSKKSLKHGSKSLRKPKVYQTTGEP) is disordered. At S2 the chain carries N-acetylserine. The residue at position 2 (S2) is a Phosphoserine. Residues 33 to 46 (KSLKHGSKSLRKPK) are compositionally biased toward basic residues. A phosphoserine mark is found at S88 and S130. The disordered stretch occupies residues 120 to 176 (KMGPKVVRNNSITSATSKTSKESQTKRKSKESPGAAASKAYSMTMETTSLSSQTNSR). 2 stretches are compositionally biased toward polar residues: residues 127 to 137 (RNNSITSATSK) and 163 to 176 (TMET…TNSR). 4 positions are modified to phosphoserine: S182, S401, S584, and S710. Positions 717–843 (DLPTQLEKIE…QDAISNQEKK (127 aa)) are disordered. The residue at position 720 (T720) is a Phosphothreonine. Over residues 752–764 (STAAKEATETSSA) the composition is skewed to low complexity. Residues S763 and S775 each carry the phosphoserine modification. The segment covering 781 to 797 (SGKEDANDCKSAEHSKE) has biased composition (basic and acidic residues). Over residues 798-810 (ISVSQKAGNNKSL) the composition is skewed to polar residues. Phosphoserine occurs at positions 816, 828, 829, and 838.

This sequence belongs to the EIS1 family.

Its subcellular location is the cytoplasmic granule. The protein localises to the cell membrane. Required for normal formation of eisosomes, large cytoplasmic protein assemblies that localize to specialized domains on plasma membrane and mark the site of endocytosis. This Saccharomyces cerevisiae (strain JAY291) (Baker's yeast) protein is Eisosome protein 1 (EIS1).